Here is a 663-residue protein sequence, read N- to C-terminus: Subtilisin-like serine protease (663 aa).

Positions 1–23 (MKKFGAVVLALFLVGLMAGSVLA) are cleaved as a signal peptide. Residues 24 to 136 (APQKPAVRNV…IQEDYVVKVA (113 aa)) constitute a propeptide, removed in mature form. One can recognise a Peptidase S8 domain in the interval 139–439 (TEGLDESAAQ…AGRVNAYKAA (301 aa)). Catalysis depends on charge relay system residues D170, H203, and S382. Ca(2+) is bound by residues P420, I423, D483, L484, D485, D497, Y498, T501, and E507. The interval 537 to 565 (VSDGSLGQPSGGGSEPSPSPSPEPTVDEK) is disordered. A propeptide spans 563 to 663 (DEKTFTGTVH…YQLDAKVYYG (101 aa)) (removed in mature form).

Belongs to the peptidase S8 family. As to quaternary structure, monomer.

The enzyme catalyses Hydrolysis of proteins with broad specificity for peptide bonds, and a preference for a large uncharged residue in P1. Hydrolyzes peptide amides.. Resistant to treatment with 5% SDS, 8 M urea, 10% Triton X-100 or 10% Tween-20. Fully active although less stable in the presence of 10 mM EDTA. Activity not affected by the absence or presence of 10 mM CaCl(2). Unstable in the presence of 2 M or over GdnHCl and loses 35% and 99% of its activity upon incubation with 2 and 4 M GdnHCl, respectively, for 1 hour at 55 degrees Celsius. Nearly fully loses activity upon incubation at pH 2.0. Serine protease with a broad substrate specificity. The polypeptide is Subtilisin-like serine protease (Thermococcus kodakarensis (strain ATCC BAA-918 / JCM 12380 / KOD1) (Pyrococcus kodakaraensis (strain KOD1))).